A 193-amino-acid chain; its full sequence is Acyl carrier protein phosphodiesterase (193 aa).

The protein belongs to the AcpH family.

It carries out the reaction holo-[ACP] + H2O = apo-[ACP] + (R)-4'-phosphopantetheine + H(+). Functionally, converts holo-ACP to apo-ACP by hydrolytic cleavage of the phosphopantetheine prosthetic group from ACP. The polypeptide is Acyl carrier protein phosphodiesterase (Yersinia enterocolitica serotype O:8 / biotype 1B (strain NCTC 13174 / 8081)).